The chain runs to 351 residues: Protein disulfide isomerase CRELD2 (351 aa).

An N-terminal signal peptide occupies residues 1–21 (MRPPAPAVLGLLLLLLPTGEA). The CXXC signature appears at 28 to 31 (CKRC). 4 disulfide bridges follow: cysteine 28–cysteine 31, cysteine 137–cysteine 151, cysteine 145–cysteine 163, and cysteine 165–cysteine 174. In terms of domain architecture, EGF-like 1 spans 133–175 (DCLACQGGSERPCSGNGHCVGDGTREGDGSCQCHLGYQGPLCS). An FU 1 repeat occupies 190 to 237 (HSICSACDEACKTCVGPTNRDCGQCEVGWVRQDDACVDVDECAAEPPP). A glycan (N-linked (GlcNAc...) asparagine) is linked at asparagine 248. An FU 2 repeat occupies 250 to 297 (SFVCEECDPTCMGCTGKGPTQCRECIAGYSKESGQCEDIDECSLAEKP). A CXXC motif is present at residues 260 to 263 (CMGC). 4 disulfide bridges follow: cysteine 260–cysteine 263, cysteine 291–cysteine 305, cysteine 298–cysteine 314, and cysteine 316–cysteine 327. The region spanning 287–328 (DIDECSLAEKPCLRDNENCYNTPGSFVCVCPDGFEEAEDTCV) is the EGF-like 2; calcium-binding domain. Residues 329–351 (QTRPAGAEATEASPTQPPSREDL) form a disordered region.

The protein belongs to the CRELD family. As to quaternary structure, interacts with CHRNA4. Component of a complex containing at least CRELD2, MANF, MATN3 and PDIA4.

The protein localises to the endoplasmic reticulum. It catalyses the reaction Catalyzes the rearrangement of -S-S- bonds in proteins.. In terms of biological role, protein disulfide isomerase. Might play a role in the unfolded protein response. May regulate transport of alpha4-beta2 neuronal acetylcholine receptor. This Bos taurus (Bovine) protein is Protein disulfide isomerase CRELD2 (CRELD2).